A 251-amino-acid polypeptide reads, in one-letter code: Tropomyosin-2 (251 aa).

The stretch at 1–251 (MSGEEKLGKL…DTVADEPDDE (251 aa)) forms a coiled coil.

It belongs to the tropomyosin family. As to quaternary structure, homodimer. As to expression, striated muscle specific.

The polypeptide is Tropomyosin-2 (TPM2) (Podocoryna carnea (Hydrozoan)).